A 752-amino-acid chain; its full sequence is MAP/microtubule affinity-regulating kinase 4 (752 aa).

The disordered stretch occupies residues 1–36 (MSSRTVLAPGNDRNSDTHGTLGSGRSSDKGPSWSSR). Residues 59–310 (YRLLRTIGKG…LEQIMKDKWI (252 aa)) enclose the Protein kinase domain. ATP contacts are provided by residues 65-73 (IGKGNFAKV) and Lys88. Residue Asp181 is the Proton acceptor of the active site. The residue at position 214 (Thr214) is a Phosphothreonine; by LKB1. The UBA domain occupies 324–368 (EPEEDFGDTKRIEVMVGMGYTREEIKESLTSQKYNEVTATYLLLG). The disordered stretch occupies residues 385–614 (ARVRAPSDTT…PAGRPRPTTN (230 aa)). Over residues 391 to 406 (SDTTNGTSSSKGTSHS) the composition is skewed to low complexity. Residues Ser423 and Ser543 each carry the phosphoserine modification. A compositionally biased stretch (low complexity) spans 544–553 (PSSHSLAPPS). Positions 703-752 (AGGPEPLSHFEVEVCQLPRPGLRGVLFRRVAGTALAFRTLVTRISNDLEL) constitute a KA1 domain.

Belongs to the protein kinase superfamily. CAMK Ser/Thr protein kinase family. SNF1 subfamily. In terms of assembly, interacts with MAPT/TAU. Interacts with gamma-tubulin. Interacts with ODF2. Interacts with USP9X. Interacts with YWHAQ. Interacts with NLRP3; promoting NLRP3 recruitment to microtubule organizing center (MTOC). Requires Mg(2+) as cofactor. Ubiquitinated with 'Lys-29'- and 'Lys-33'-linked polyubiquitins which appear to impede LKB1-mediated phosphorylation. Deubiquitinated by USP9X. Post-translationally, phosphorylated at Thr-214 by STK11/LKB1 in complex with STE20-related adapter-alpha (STRADA) pseudo kinase and CAB39. Phosphorylated throughout the cell cycle. Ubiquitous. Isoform 2 is brain-specific. Expressed at highest levels in brain and testis. Also expressed in heart, lung, liver, muscle, kidney and spleen.

It localises to the cytoplasm. It is found in the cytoskeleton. The protein localises to the microtubule organizing center. Its subcellular location is the centrosome. The protein resides in the cilium basal body. It localises to the cilium axoneme. It is found in the cell projection. The protein localises to the dendrite. The catalysed reaction is L-seryl-[protein] + ATP = O-phospho-L-seryl-[protein] + ADP + H(+). It carries out the reaction L-threonyl-[protein] + ATP = O-phospho-L-threonyl-[protein] + ADP + H(+). Activated by phosphorylation on Thr-214. In terms of biological role, serine/threonine-protein kinase. Phosphorylates the microtubule-associated protein MAPT/TAU. Also phosphorylates the microtubule-associated proteins MAP2 and MAP4. Involved in regulation of the microtubule network, causing reorganization of microtubules into bundles. Required for the initiation of axoneme extension during cilium assembly. Regulates the centrosomal location of ODF2 and phosphorylates ODF2 in vitro. Plays a role in cell cycle progression, specifically in the G1/S checkpoint. Reduces neuronal cell survival. Plays a role in energy homeostasis by regulating satiety and metabolic rate. Promotes adipogenesis by activating JNK1 and inhibiting the p38MAPK pathway, and triggers apoptosis by activating the JNK1 pathway. Phosphorylates mTORC1 complex member RPTOR and acts as a negative regulator of the mTORC1 complex, probably due to disruption of the interaction between phosphorylated RPTOR and the RRAGA/RRAGC heterodimer which is required for mTORC1 activation. Involved in NLRP3 positioning along microtubules by mediating NLRP3 recruitment to microtubule organizing center (MTOC) upon inflammasome activation. The protein is MAP/microtubule affinity-regulating kinase 4 of Homo sapiens (Human).